The chain runs to 359 residues: Probably inactive receptor-like protein kinase At5g41680 (359 aa).

Residues 59–357 (AASAEILGKG…KLIQDIPTNF (299 aa)) form the Protein kinase domain. Residues 65–73 (LGKGAHVTT) and Lys-87 contribute to the ATP site.

Belongs to the protein kinase superfamily. Ser/Thr protein kinase family.

The sequence is that of Probably inactive receptor-like protein kinase At5g41680 from Arabidopsis thaliana (Mouse-ear cress).